Consider the following 395-residue polypeptide: Acid ceramidase (395 aa).

Residues 1–20 (MLGWSRLTFILLSGIVTCLV) form the signal peptide. Residues C31 and C340 are joined by a disulfide bond. The active-site Nucleophile is the C143. N195, N259, N286, and N342 each carry an N-linked (GlcNAc...) asparagine glycan. C388 and C392 are joined by a disulfide.

This sequence belongs to the acid ceramidase family. In terms of assembly, heterodimer; disulfide-linked. The heterodimer is composed of the disulfide-linked alpha and beta chains produced by autocatalytic cleavage of the precursor. N-glycosylated. Post-translationally, proteolytically cleaved into two chains alpha and beta that remain associated via a disulfide bond. Cleavage gives rise to a conformation change that activates the enzyme. The same catalytic Cys residue mediates the autoproteolytic cleavage and subsequent hydrolysis of lipid substrates. The beta chain may undergo an additional C-terminal processing.

It localises to the lysosome. Its subcellular location is the secreted. The catalysed reaction is an N-acylsphing-4-enine + H2O = sphing-4-enine + a fatty acid. It catalyses the reaction N-dodecanoylsphing-4-enine + H2O = dodecanoate + sphing-4-enine. It carries out the reaction N-tetradecanoylsphing-4-enine + H2O = tetradecanoate + sphing-4-enine. The enzyme catalyses N-hexadecanoylsphing-4-enine + H2O = sphing-4-enine + hexadecanoate. The catalysed reaction is N-octadecanoylsphing-4-enine + H2O = sphing-4-enine + octadecanoate. It catalyses the reaction N-dodecanoyl-(4R)-hydroxysphinganine + H2O = (4R)-hydroxysphinganine + dodecanoate. It carries out the reaction N-(dodecanoyl)-sphinganine + H2O = dodecanoate + sphinganine. The enzyme catalyses N-(acetyl)-sphing-4-enine + H2O = sphing-4-enine + acetate. The catalysed reaction is N-(hexanoyl)sphing-4-enine + H2O = hexanoate + sphing-4-enine. It catalyses the reaction N-octanoylsphing-4-enine + H2O = octanoate + sphing-4-enine. It carries out the reaction N-(9Z-octadecenoyl)-sphing-4-enine + H2O = sphing-4-enine + (9Z)-octadecenoate. The enzyme catalyses N-dodecanoylethanolamine + H2O = dodecanoate + ethanolamine. The protein operates within lipid metabolism; sphingolipid metabolism. Functionally, lysosomal ceramidase that hydrolyzes sphingolipid ceramides into sphingosine and free fatty acids at acidic pH. Ceramides, sphingosine, and its phosphorylated form sphingosine-1-phosphate are bioactive lipids that mediate cellular signaling pathways regulating several biological processes including cell proliferation, apoptosis and differentiation. Has a higher catalytic efficiency towards C12-ceramides versus other ceramides. Also catalyzes the reverse reaction allowing the synthesis of ceramides from fatty acids and sphingosine. For the reverse synthetic reaction, the natural sphingosine D-erythro isomer is more efficiently utilized as a substrate compared to D-erythro-dihydrosphingosine and D-erythro-phytosphingosine, while the fatty acids with chain lengths of 12 or 14 carbons are the most efficiently used. Also has an N-acylethanolamine hydrolase activity. By regulating the levels of ceramides, sphingosine and sphingosine-1-phosphate in the epidermis, mediates the calcium-induced differentiation of epidermal keratinocytes. Also indirectly regulates tumor necrosis factor/TNF-induced apoptosis. By regulating the intracellular balance between ceramides and sphingosine, in adrenocortical cells, probably also acts as a regulator of steroidogenesis. The polypeptide is Acid ceramidase (Bos taurus (Bovine)).